A 450-amino-acid polypeptide reads, in one-letter code: uncharacterized protein (450 aa).

N6-(pyridoxal phosphate)lysine is present on K283.

This sequence belongs to the class-III pyridoxal-phosphate-dependent aminotransferase family. Requires pyridoxal 5'-phosphate as cofactor.

In terms of biological role, essential for glycerol catabolism. This is an uncharacterized protein from Bacillus subtilis (strain 168).